The primary structure comprises 104 residues: Small ribosomal subunit protein uS10 (104 aa).

It belongs to the universal ribosomal protein uS10 family. As to quaternary structure, part of the 30S ribosomal subunit.

Its function is as follows. Involved in the binding of tRNA to the ribosomes. The sequence is that of Small ribosomal subunit protein uS10 from Variovorax paradoxus (strain S110).